The following is a 543-amino-acid chain: MEMAKSIMFGEDARRSMQKGVDILADTVKVTMGPKGRNVVLDKKFGAPLITNDGVTIAREIELEDAYENMGAQLVKEVATKTNDVAGDGTTTATLLAQAIIREGLKNVTGGANPMLVRRGIQMAVEEAVKGIKEISKPVEGKEDIARVAAISADDKEIGKLIADAMEKVGNEGVITVEESNTMGTELDVVEGMQFDRGYVSPYMVTDTEKMEASLDDAYILITDKKITNIQEILPVLEQIVQQGKRLLIISEDIEGEALATLVVNKLRGTFTCVAVKAPGFGDRRKEMLEDIATLTGGQVISEEIGRDLKDVTVDMLGRAESVKITKETTTIVNGKGNKKEIEDRVNQIKAQIEETTSEFDREKLQERLAKLAGGVAVIKVGAATETELKERKLRIEDALAATKAAVEEGIIPGGGTAYAMVIKEVEKLNSETHDIKLGIDIVKKSLEEPVRQIACNAGVEGSIVIEKVKHSEAGIGYDALNNEYVNMIKAGIVDPTKVSRSALQNAASVASTFLTTEAAIADIPEKNDTPMPGAPGMMDGMY.

Residues 31–34 (TMGP), 88–92 (DGTTT), glycine 415, 479–481 (DAL), and aspartate 495 each bind ATP.

Belongs to the chaperonin (HSP60) family. Forms a cylinder of 14 subunits composed of two heptameric rings stacked back-to-back. Interacts with the co-chaperonin GroES.

The protein resides in the cytoplasm. The enzyme catalyses ATP + H2O + a folded polypeptide = ADP + phosphate + an unfolded polypeptide.. Its function is as follows. Together with its co-chaperonin GroES, plays an essential role in assisting protein folding. The GroEL-GroES system forms a nano-cage that allows encapsulation of the non-native substrate proteins and provides a physical environment optimized to promote and accelerate protein folding. The sequence is that of Chaperonin GroEL from Clostridium tetani (strain Massachusetts / E88).